We begin with the raw amino-acid sequence, 513 residues long: Histidine ammonia-lyase (513 aa).

A cross-link (5-imidazolinone (Ala-Gly)) is located at residues 143 to 145 (ASG). A 2,3-didehydroalanine (Ser) modification is found at S144.

It belongs to the PAL/histidase family. Post-translationally, contains an active site 4-methylidene-imidazol-5-one (MIO), which is formed autocatalytically by cyclization and dehydration of residues Ala-Ser-Gly.

It localises to the cytoplasm. The enzyme catalyses L-histidine = trans-urocanate + NH4(+). The protein operates within amino-acid degradation; L-histidine degradation into L-glutamate; N-formimidoyl-L-glutamate from L-histidine: step 1/3. This Xanthomonas axonopodis pv. citri (strain 306) protein is Histidine ammonia-lyase.